The sequence spans 311 residues: MTGGGNITEITYFILLGFSDFPRIIKVLFTIFLVIYITSLAWNLSLIVLIRMDSHLHTPMYFFLSNLSFIDVCYISSTVPKMLSNLLQEQQTITFVGCIIQYFIFSTMGLSESCLMTAMAYDRYAAICNPLLYSSIMSPTLCVWMVLGAYMTGLTASLFQIGALLQLHFCGSNVIRHFFCDMPQLLILSCTDTFFVQVMTAILTMFFGIASALVIMISYGYIGISIMKITSAKGRSKAFNTCASHLTAVSLFYTSGIFVYLSSSSGGSSSFDRFASVFYTVVIPMLNPLIYSLRNKEIKDALKRLQKRKCC.

The Extracellular portion of the chain corresponds to 1 to 26; that stretch reads MTGGGNITEITYFILLGFSDFPRIIK. N-linked (GlcNAc...) asparagine glycosylation is present at asparagine 6. Residues 27–47 form a helical membrane-spanning segment; it reads VLFTIFLVIYITSLAWNLSLI. Residues 48 to 55 lie on the Cytoplasmic side of the membrane; it reads VLIRMDSH. The helical transmembrane segment at 56–76 threads the bilayer; that stretch reads LHTPMYFFLSNLSFIDVCYIS. Over 77–100 the chain is Extracellular; it reads STVPKMLSNLLQEQQTITFVGCII. Cysteine 98 and cysteine 190 form a disulfide bridge. Residues 101–121 form a helical membrane-spanning segment; that stretch reads QYFIFSTMGLSESCLMTAMAY. The Cytoplasmic portion of the chain corresponds to 122–134; sequence DRYAAICNPLLYS. A helical membrane pass occupies residues 135 to 155; sequence SIMSPTLCVWMVLGAYMTGLT. Residues 156–197 are Extracellular-facing; that stretch reads ASLFQIGALLQLHFCGSNVIRHFFCDMPQLLILSCTDTFFVQ. A helical membrane pass occupies residues 198–218; the sequence is VMTAILTMFFGIASALVIMIS. Residues 219 to 238 lie on the Cytoplasmic side of the membrane; sequence YGYIGISIMKITSAKGRSKA. Residues 239-259 form a helical membrane-spanning segment; the sequence is FNTCASHLTAVSLFYTSGIFV. At 260–272 the chain is on the extracellular side; sequence YLSSSSGGSSSFD. The chain crosses the membrane as a helical span at residues 273–293; sequence RFASVFYTVVIPMLNPLIYSL. Over 294–311 the chain is Cytoplasmic; the sequence is RNKEIKDALKRLQKRKCC.

This sequence belongs to the G-protein coupled receptor 1 family.

It is found in the cell membrane. Odorant receptor for musk, which specifically recognizes muscone, musk xylol, and musk ketone. Ligand-binding causes a conformation change that triggers signaling via G(s)-class of G alpha protein GNAL, activating adenylyl cyclase. The protein is Olfactory receptor 5AN1 of Homo sapiens (Human).